Here is a 552-residue protein sequence, read N- to C-terminus: Urocanate hydratase (552 aa).

NAD(+)-binding positions include 49–50 (GG), Q127, 173–175 (GMG), E193, R198, 239–240 (NA), 260–264 (QTSAH), 270–271 (YV), and Y319. The active site involves C407. G489 contacts NAD(+).

Belongs to the urocanase family. In terms of assembly, composed of at least two subunits. The cofactor is NAD(+).

It is found in the cytoplasm. It catalyses the reaction 4-imidazolone-5-propanoate = trans-urocanate + H2O. It participates in amino-acid degradation; L-histidine degradation into L-glutamate; N-formimidoyl-L-glutamate from L-histidine: step 2/3. Catalyzes the conversion of urocanate to 4-imidazolone-5-propionate. The chain is Urocanate hydratase from Bacillus subtilis (strain 168).